Here is a 984-residue protein sequence, read N- to C-terminus: Putative formate dehydrogenase SAV2309 (984 aa).

A 2Fe-2S ferredoxin-type domain is found at 3 to 79; it reads EHLVVTLDGK…PMTVNTVNND (77 aa). [2Fe-2S] cluster is bound by residues C37, C48, C51, and C63. The region spanning 79–119 is the 4Fe-4S His(Cys)3-ligated-type domain; the sequence is DVKDAQKEALDRILEKHMLYCTVCDYNNGDCEIHNTMDAWG. 16 residues coordinate [4Fe-4S] cluster: H95, C99, C102, C109, C147, C150, C153, C157, C190, C193, C196, C200, C264, C267, C271, and C299. 2 consecutive 4Fe-4S ferredoxin-type domains span residues 138–165 and 181–211; these read PFYR…VNET and NDVP…VNME. A formate dehydrogenase region spans residues 252–984; it reads MRKERIKKTK…YVFPGNQVDK (733 aa). The region spanning 257–313 is the 4Fe-4S Mo/W bis-MGD-type domain; the sequence is IKKTKTVCTYCGVGCSFEVWTKDREILKVQPSHDSPANKIVTCVKGKFSWGHINSDQ.

It in the C-terminal section; belongs to the prokaryotic molybdopterin-containing oxidoreductase family. [2Fe-2S] cluster is required as a cofactor. [4Fe-4S] cluster serves as cofactor. The cofactor is Mo-bis(molybdopterin guanine dinucleotide).

The catalysed reaction is formate + NAD(+) = CO2 + NADH. In Staphylococcus aureus (strain Mu50 / ATCC 700699), this protein is Putative formate dehydrogenase SAV2309.